A 456-amino-acid polypeptide reads, in one-letter code: N(6)-adenosine-methyltransferase non-catalytic subunit METTL14 (456 aa).

The tract at residues 43 to 74 (EIAETRETSRASYDTSAAVSKRKLPEEGKADE) is disordered. Over residues 65 to 74 (KLPEEGKADE) the composition is skewed to basic and acidic residues. Interaction with METTL3 regions lie at residues 135 to 136 (RD) and 237 to 238 (SG). The interval 245 to 254 (RMCLRKWGFR) is positively charged region required for RNA-binding. Interaction with METTL3 stretches follow at residues 255-258 (RSED) and 278-287 (KAIFQRTKEH). The interval 297 to 298 (HR) is positively charged region required for RNA-binding. Residues 308–312 (NVDID) form an interaction with METTL3 region. Residues 395-456 (LRPKTPPPKS…GPHRGVFAPR (62 aa)) are disordered. The span at 410 to 421 (ASRGGGRGGASA) shows a compositional bias: gly residues. Residues 423–441 (RGERGRERNRGSFRGDRGN) show a composition bias toward basic and acidic residues.

The protein belongs to the MT-A70-like family. Heterodimer; heterodimerizes with mettl3 to form an antiparallel heterodimer that constitutes an active methyltransferase. Component of the WMM complex, a N6-methyltransferase complex composed of a catalytic subcomplex, named MAC, and of an associated subcomplex, named MACOM. The MAC subcomplex is composed of mettl3 and mettl14.

The protein localises to the nucleus. Its function is as follows. The METTL3-METTL14 heterodimer forms a N6-methyltransferase complex that methylates adenosine residues at the N(6) position of some mRNAs and regulates the circadian clock, differentiation of embryonic stem cells and cortical neurogenesis. In the heterodimer formed with mettl3, mettl14 constitutes the RNA-binding scaffold that recognizes the substrate rather than the catalytic core. N6-methyladenosine (m6A), which takes place at the 5'-[AG]GAC-3' consensus sites of some mRNAs, plays a role in mRNA stability and processing. In Xenopus laevis (African clawed frog), this protein is N(6)-adenosine-methyltransferase non-catalytic subunit METTL14 (mettl14).